Consider the following 503-residue polypeptide: Probable cytosol aminopeptidase (503 aa).

Mn(2+)-binding residues include K274 and D279. K286 is an active-site residue. Residues D297, D356, and E358 each coordinate Mn(2+). R360 is an active-site residue.

Belongs to the peptidase M17 family. Mn(2+) is required as a cofactor.

The protein resides in the cytoplasm. The catalysed reaction is Release of an N-terminal amino acid, Xaa-|-Yaa-, in which Xaa is preferably Leu, but may be other amino acids including Pro although not Arg or Lys, and Yaa may be Pro. Amino acid amides and methyl esters are also readily hydrolyzed, but rates on arylamides are exceedingly low.. It catalyses the reaction Release of an N-terminal amino acid, preferentially leucine, but not glutamic or aspartic acids.. Presumably involved in the processing and regular turnover of intracellular proteins. Catalyzes the removal of unsubstituted N-terminal amino acids from various peptides. The polypeptide is Probable cytosol aminopeptidase (Burkholderia ambifaria (strain ATCC BAA-244 / DSM 16087 / CCUG 44356 / LMG 19182 / AMMD) (Burkholderia cepacia (strain AMMD))).